A 310-amino-acid polypeptide reads, in one-letter code: ADP-L-glycero-D-manno-heptose-6-epimerase (310 aa).

NADP(+) contacts are provided by residues 10 to 11 (FI), 31 to 32 (DN), K38, K53, 75 to 79 (EGACS), and N92. The active-site Proton acceptor is the Y140. NADP(+) is bound at residue K144. Residue N169 participates in substrate binding. NADP(+) is bound by residues V170 and K178. K178 acts as the Proton acceptor in catalysis. Residues S180, H187, 201–204 (FSGS), R209, and Y272 contribute to the substrate site.

The protein belongs to the NAD(P)-dependent epimerase/dehydratase family. HldD subfamily. As to quaternary structure, homopentamer. NADP(+) serves as cofactor.

It carries out the reaction ADP-D-glycero-beta-D-manno-heptose = ADP-L-glycero-beta-D-manno-heptose. It participates in nucleotide-sugar biosynthesis; ADP-L-glycero-beta-D-manno-heptose biosynthesis; ADP-L-glycero-beta-D-manno-heptose from D-glycero-beta-D-manno-heptose 7-phosphate: step 4/4. Its function is as follows. Catalyzes the interconversion between ADP-D-glycero-beta-D-manno-heptose and ADP-L-glycero-beta-D-manno-heptose via an epimerization at carbon 6 of the heptose. The protein is ADP-L-glycero-D-manno-heptose-6-epimerase of Pectobacterium atrosepticum (strain SCRI 1043 / ATCC BAA-672) (Erwinia carotovora subsp. atroseptica).